The chain runs to 276 residues: TIMELESS-interacting protein (276 aa).

Positions 1–54 (MLEQEENGLFEIPDYEHVEDETFPPFPPPGSPERDPAEAEPDEGSGAPVPVPPK) are disordered. An interaction with TIMELESS region spans residues 64 to 140 (LDATRLTSER…KEVQTCLKRI (77 aa)). Over residues 217–243 (SNSQSLENDVTVEESSTGENQEESNGL) the composition is skewed to polar residues. A disordered region spans residues 217-276 (SNSQSLENDVTVEESSTGENQEESNGLISADGPHDVPSASTQEEGQLEAEETQLDHPNLD). Ser-219 carries the phosphoserine modification. Thr-233 is subject to Phosphothreonine.

It belongs to the CSM3 family. Interacts with TIMELESS, which impairs TIMELESS self-association (via N-terminus). Associates with the MCM2-7 complex. Interacts with RPA2, PRDX2.

The protein resides in the cytoplasm. The protein localises to the nucleus. Plays an important role in the control of DNA replication and the maintenance of replication fork stability. Important for cell survival after DNA damage or replication stress. May be specifically required for the ATR-CHEK1 pathway in the replication checkpoint induced by hydroxyurea or ultraviolet light. Forms a complex with TIMELESS and this complex regulates DNA replication processes under both normal and stress conditions, stabilizes replication forks and influences both CHEK1 phosphorylation and the intra-S phase checkpoint in response to genotoxic stress. The protein is TIMELESS-interacting protein (Tipin) of Rattus norvegicus (Rat).